A 313-amino-acid chain; its full sequence is MMENYKHTTVLLDEAVNGLNIRPDGIYIDGTFGRGGHSRLILSQLGEEGRLLAIDRDPQAIAVAKTIDDPRFSIIHGPFSALGEYVAERDLIGKIDGILLDLGVSSPQLDDAERGFSFMRDGPLDMRMDPTRGQSAAEWLQTAEEADIAWVLKTYGEERFAKRIARAIVERNREQPMTRTKELAEVVAAATPVKDKFKHPATRTFQAVRIWVNSELEEIEQALKSSLNVLAPGGRLSIISFHSLEDRIVKRFMRENSRGPQVPAGLPMTEEQLKKLGGRQLRALGKLMPGEEEVAENPRARSSVLRIAERTNA.

Residues 35–37 (GGH), D55, F79, D101, and Q108 contribute to the S-adenosyl-L-methionine site.

The protein belongs to the methyltransferase superfamily. RsmH family.

It localises to the cytoplasm. It carries out the reaction cytidine(1402) in 16S rRNA + S-adenosyl-L-methionine = N(4)-methylcytidine(1402) in 16S rRNA + S-adenosyl-L-homocysteine + H(+). Functionally, specifically methylates the N4 position of cytidine in position 1402 (C1402) of 16S rRNA. This Escherichia coli O139:H28 (strain E24377A / ETEC) protein is Ribosomal RNA small subunit methyltransferase H.